The primary structure comprises 529 residues: Variant surface glycoprotein MITAT 1.6 (529 aa).

An N-terminal signal peptide occupies residues 1-24 (MAVHRALAAYAISLYVLLPRKSGA). Intrachain disulfides connect cysteine 39–cysteine 170 and cysteine 147–cysteine 214. The N-linked (GlcNAc...) (high mannose) asparagine glycan is linked to asparagine 456. Aspartate 506 is lipidated: GPI-anchor amidated aspartate. Positions 507-529 (SSILVTKKFALTVVSAAFVALLF) are cleaved as a propeptide — removed in mature form.

Post-translationally, N-glycosylated; glycan is composed of 6 to 9 mannose residues.

It localises to the cell membrane. In terms of biological role, VSG forms a coat on the surface of the parasite. The trypanosome evades the immune response of the host by expressing a series of antigenically distinct VSGs from an estimated 1000 VSG genes. This Trypanosoma brucei brucei protein is Variant surface glycoprotein MITAT 1.6.